The primary structure comprises 165 residues: Nucleotide-binding protein LBF_1338 (165 aa).

It belongs to the YajQ family.

Functionally, nucleotide-binding protein. The protein is Nucleotide-binding protein LBF_1338 of Leptospira biflexa serovar Patoc (strain Patoc 1 / Ames).